A 294-amino-acid polypeptide reads, in one-letter code: 33 kDa chaperonin (294 aa).

2 disulfide bridges follow: cysteine 238–cysteine 240 and cysteine 271–cysteine 274.

The protein belongs to the HSP33 family. Under oxidizing conditions two disulfide bonds are formed involving the reactive cysteines. Under reducing conditions zinc is bound to the reactive cysteines and the protein is inactive.

The protein resides in the cytoplasm. Functionally, redox regulated molecular chaperone. Protects both thermally unfolding and oxidatively damaged proteins from irreversible aggregation. Plays an important role in the bacterial defense system toward oxidative stress. The chain is 33 kDa chaperonin from Staphylococcus carnosus (strain TM300).